We begin with the raw amino-acid sequence, 321 residues long: Annexin A5 (321 aa).

Ala2 carries the post-translational modification N-acetylalanine. Annexin repeat units follow at residues 15 to 86 (FDER…ALMK), 87 to 158 (PSRL…VLLQ), 170 to 242 (AQVE…AVVK), and 246 to 317 (SIPA…LLCG). Lys29 participates in a covalent cross-link: Glycyl lysine isopeptide (Lys-Gly) (interchain with G-Cter in SUMO1); alternate. Residue Lys29 forms a Glycyl lysine isopeptide (Lys-Gly) (interchain with G-Cter in SUMO2); alternate linkage. N6-acetyllysine occurs at positions 70, 76, 79, 97, and 101. Lys290 is subject to N6-succinyllysine. The [IL]-x-C-x-x-[DE] motif signature appears at 314–320 (LLCGGED).

The protein belongs to the annexin family. Monomer. Binds ATRX and EIF5B. Post-translationally, S-nitrosylation is induced by interferon-gamma and oxidatively-modified low-densitity lipoprotein (LDL(ox)) possibly implicating the iNOS-S100A8/9 transnitrosylase complex.

In terms of biological role, this protein is an anticoagulant protein that acts as an indirect inhibitor of the thromboplastin-specific complex, which is involved in the blood coagulation cascade. In Bos taurus (Bovine), this protein is Annexin A5 (ANXA5).